The chain runs to 204 residues: Large ribosomal subunit protein uL22m (204 aa).

The transit peptide at 1 to 38 directs the protein to the mitochondrion; sequence MAAVILERLGALWVQNLRGKLALGILPQSHIHTSASLE.

It belongs to the universal ribosomal protein uL22 family. As to quaternary structure, component of the mitochondrial ribosome large subunit (39S) which comprises a 16S rRNA and about 50 distinct proteins.

The protein localises to the mitochondrion. This Bos taurus (Bovine) protein is Large ribosomal subunit protein uL22m (MRPL22).